The sequence spans 39 residues: Omega-actinopoditoxin-Mb1a (39 aa).

3 disulfides stabilise this stretch: Cys4–Cys19, Cys11–Cys30, and Cys18–Cys38.

Post-translationally, contains 3 disulfide bonds. As to expression, expressed by the venom gland.

It is found in the secreted. Potent inhibitor of insect, but not mammalian, voltage-gated calcium channels (Cav). This is Omega-actinopoditoxin-Mb1a from Missulena bradleyi (Eastern mouse spider).